The primary structure comprises 166 residues: Transcription antitermination protein NusB (166 aa).

The protein belongs to the NusB family.

Its function is as follows. Involved in transcription antitermination. Required for transcription of ribosomal RNA (rRNA) genes. Binds specifically to the boxA antiterminator sequence of the ribosomal RNA (rrn) operons. The chain is Transcription antitermination protein NusB from Chromohalobacter salexigens (strain ATCC BAA-138 / DSM 3043 / CIP 106854 / NCIMB 13768 / 1H11).